The sequence spans 105 residues: Small ribosomal subunit protein uS17 (105 aa).

Belongs to the universal ribosomal protein uS17 family. Part of the 30S ribosomal subunit. Contacts protein S12.

Functionally, one of the primary rRNA binding proteins, it binds directly to 16S rRNA where it helps nucleate assembly of the platform and body of the 30S subunit by bringing together and stabilizing interactions between several different RNA helices. The combined cluster of proteins S8, S12 and S17 appears to hold together the shoulder and platform of the 30S subunit. The protein is Small ribosomal subunit protein uS17 of Thermus thermophilus (strain ATCC 27634 / DSM 579 / HB8).